Consider the following 138-residue polypeptide: Small ribosomal subunit protein uS11c (138 aa).

The disordered stretch occupies residues 1–22; the sequence is MAKSIPRISSRRNGPIGSGKTV.

It belongs to the universal ribosomal protein uS11 family. Part of the 30S ribosomal subunit.

The protein resides in the plastid. The protein is Small ribosomal subunit protein uS11c of Cuscuta exaltata (Tall dodder).